The sequence spans 433 residues: Putative purine permease YbbY (433 aa).

At 1 to 17 (MFNFAVSRESLLSGFQW) the chain is on the periplasmic side. A helical membrane pass occupies residues 18 to 38 (FFFIFCNTVVVPPTLLSAFQL). Over 39 to 42 (PQSS) the chain is Cytoplasmic. The helical transmembrane segment at 43 to 63 (LLTLTQYAFLATALACFAQAF) threads the bilayer. The Periplasmic segment spans residues 64 to 68 (CGHRR). A helical transmembrane segment spans residues 69–89 (AIMEGPGGLWWGTILTITLGE). The Cytoplasmic portion of the chain corresponds to 90-102 (ASRGTPINDIATS). The helical transmembrane segment at 103-123 (LAVGIALSGVLTMLIGFSGLG) threads the bilayer. Topologically, residues 124–130 (HRLARLF) are periplasmic. A helical membrane pass occupies residues 131 to 151 (TPSVMVLFMLMLGAQLTTIFF). The Cytoplasmic portion of the chain corresponds to 152 to 169 (KGMLGLPFGIADPNFKIQ). A helical transmembrane segment spans residues 170–190 (LPPFALSVAVMCLVLAMIIFL). The Periplasmic segment spans residues 191-196 (PQRFAR). The helical transmembrane segment at 197-217 (YGLLVGTITGWLLWYFCFPSS) threads the bilayer. Topologically, residues 218–230 (HSLSGELHWQWFP) are cytoplasmic. Residues 231 to 251 (LGSGGALSPGIILTAVITGLV) traverse the membrane as a helical segment. Residues 252-288 (NISNTYGAIRGTDVFYPQQGAGNTRYRRSFVATGFMT) lie on the Periplasmic side of the membrane. Residues 289–309 (LITVPLAVIPFSPFVSSIGLL) form a helical membrane-spanning segment. Residues 310–319 (TQTGDYTRRS) are Cytoplasmic-facing. A helical transmembrane segment spans residues 320 to 340 (FIYGSVICLLVALVPALTRLF). Topologically, residues 341-345 (CSIPL) are periplasmic. A helical transmembrane segment spans residues 346–366 (PVSSAVMLVSYLPLLFSALVF). Residues 367–379 (SQQITFTARNIYR) are Cytoplasmic-facing. A helical transmembrane segment spans residues 380–400 (LALPLFVGIFLMALPPVYLQD). Residues 401–407 (LPLTLRP) lie on the Periplasmic side of the membrane. A helical transmembrane segment spans residues 408–428 (LLSNGLLVGILLAVLMDNLIP). The Cytoplasmic segment spans residues 429–433 (WERIE).

Belongs to the nucleobase:cation symporter-2 (NCS2) (TC 2.A.40) family.

Its subcellular location is the cell inner membrane. This is Putative purine permease YbbY (ybbY) from Escherichia coli (strain K12).